Reading from the N-terminus, the 292-residue chain is BTB/POZ domain-containing protein KCTD7 (292 aa).

Positions Met1–Tyr27 are disordered. Residues Ile56–Leu144 enclose the BTB domain.

Its subcellular location is the cell membrane. It is found in the cytoplasm. It localises to the cytosol. The polypeptide is BTB/POZ domain-containing protein KCTD7 (kctd7) (Danio rerio (Zebrafish)).